A 501-amino-acid chain; its full sequence is Probable cytochrome P450 28d2 (501 aa).

C446 contributes to the heme binding site.

This sequence belongs to the cytochrome P450 family. The cofactor is heme.

It localises to the endoplasmic reticulum membrane. The protein localises to the microsome membrane. Its function is as follows. May be involved in the metabolism of insect hormones and in the breakdown of synthetic insecticides. This is Probable cytochrome P450 28d2 (Cyp28d2) from Drosophila melanogaster (Fruit fly).